We begin with the raw amino-acid sequence, 358 residues long: Peptide chain release factor 1 (358 aa).

Gln233 is subject to N5-methylglutamine.

Belongs to the prokaryotic/mitochondrial release factor family. Methylated by PrmC. Methylation increases the termination efficiency of RF1.

It is found in the cytoplasm. In terms of biological role, peptide chain release factor 1 directs the termination of translation in response to the peptide chain termination codons UAG and UAA. The sequence is that of Peptide chain release factor 1 from Clostridium botulinum (strain Okra / Type B1).